A 310-amino-acid polypeptide reads, in one-letter code: HPr kinase/phosphorylase 1 (310 aa).

Residues H139 and K160 contribute to the active site. Residue 154–161 (GQSGVGKS) coordinates ATP. S161 contacts Mg(2+). D178 acts as the Proton acceptor; for phosphorylation activity. Proton donor; for dephosphorylation activity in catalysis. The important for the catalytic mechanism of both phosphorylation and dephosphorylation stretch occupies residues 202 to 211 (LEIRGLGIIN). E203 is a Mg(2+) binding site. R244 is a catalytic residue. An important for the catalytic mechanism of dephosphorylation region spans residues 265 to 270 (PVRPGR).

Belongs to the HPrK/P family. Homohexamer. It depends on Mg(2+) as a cofactor.

It catalyses the reaction [HPr protein]-L-serine + ATP = [HPr protein]-O-phospho-L-serine + ADP + H(+). It carries out the reaction [HPr protein]-O-phospho-L-serine + phosphate + H(+) = [HPr protein]-L-serine + diphosphate. Catalyzes the ATP- as well as the pyrophosphate-dependent phosphorylation of a specific serine residue in HPr, a phosphocarrier protein of the phosphoenolpyruvate-dependent sugar phosphotransferase system (PTS). HprK/P also catalyzes the pyrophosphate-producing, inorganic phosphate-dependent dephosphorylation (phosphorolysis) of seryl-phosphorylated HPr (P-Ser-HPr). The two antagonistic activities of HprK/P are regulated by several intracellular metabolites, which change their concentration in response to the absence or presence of rapidly metabolisable carbon sources (glucose, fructose, etc.) in the growth medium. Also phosphorylates/dephosphorylates the HPr-like catabolite repression protein crh on a specific serine residue. Therefore, by controlling the phosphorylation state of HPr and crh, HPrK/P is a sensor enzyme that plays a major role in the regulation of carbon metabolism and sugar transport: it mediates carbon catabolite repression (CCR), and regulates PTS-catalyzed carbohydrate uptake and inducer exclusion. This Oceanobacillus iheyensis (strain DSM 14371 / CIP 107618 / JCM 11309 / KCTC 3954 / HTE831) protein is HPr kinase/phosphorylase 1 (hprK1).